The following is a 667-amino-acid chain: Soluble guanylate cyclase 89Da (667 aa).

H104 contributes to the heme binding site. The interval 337-364 (AQEFSESHPVDDDESAREDEIDPATGER) is disordered. Positions 347-358 (DDDESAREDEID) are enriched in acidic residues. Positions 427–455 (QHCSKLEIMFEKEEQRSDELEKSLELADS) form a coiled coil. The region spanning 491–617 (SVIFLEVMNV…DTVNTASRME (127 aa)) is the Guanylate cyclase domain.

Belongs to the adenylyl cyclase class-4/guanylyl cyclase family. As to quaternary structure, heterodimer; with Gyc88E, in the presence of magnesium or manganese. The cofactor is heme.

The protein localises to the cytoplasm. It carries out the reaction GTP = 3',5'-cyclic GMP + diphosphate. Probably not activated by nitric oxide (NO). Heterodimer also exhibits some stimulation, some compounds (SIN-1 and two of the NONOates) that were ineffective at stimulating Gyc-88E alone did stimulate the heterodimer. Functionally, heterodimers with Gyc-89Da and Gyc-89Db are activated in response to changing oxygen concentrations, alerting flies to hypoxic environments. Under normal oxygen concentrations, oxygen binds to the heme group and results in low levels of guanylyl cyclase activity. When exposed to reduced oxygen concentrations, the oxygen dissociates from the heme group resulting in activation of the enzyme. In Drosophila melanogaster (Fruit fly), this protein is Soluble guanylate cyclase 89Da.